Consider the following 421-residue polypeptide: Medium-chain specific acyl-CoA dehydrogenase, mitochondrial (421 aa).

The N-terminal 25 residues, 1–25 (MAAALRRGYKVLRSVSHFECRAQHT), are a transit peptide targeting the mitochondrion. N6-acetyllysine; alternate is present on Lys69. An N6-succinyllysine; alternate modification is found at Lys69. At Lys79 the chain carries N6-acetyllysine. An FAD-binding site is contributed by 158–167 (YCVTEPSAGS). Ser167 is a binding site for octanoyl-CoA. Lys179 bears the N6-succinyllysine mark. 191–193 (WIT) serves as a coordination point for FAD. Lys212 carries the N6-acetyllysine; alternate modification. The residue at position 212 (Lys212) is an N6-succinyllysine; alternate. Ser216 provides a ligand contact to octanoyl-CoA. Residues Lys217, Lys259, and Lys271 each carry the N6-acetyllysine; alternate modification. N6-succinyllysine; alternate is present on residues Lys217, Lys259, and Lys271. Positions 278 and 281 each coordinate octanoyl-CoA. The residue at position 301 (Lys301) is an N6-acetyllysine. FAD is bound by residues 306-308 (RKT) and 316-317 (HQ). Octanoyl-CoA is bound by residues Arg349 and Thr351. The residue at position 351 (Thr351) is a Phosphothreonine. 374–378 (QIFGG) provides a ligand contact to FAD. Glu401 serves as a coordination point for octanoyl-CoA. Glu401 functions as the Proton acceptor in the catalytic mechanism. Position 402–405 (402–405 (GTAQ)) interacts with FAD.

Belongs to the acyl-CoA dehydrogenase family. In terms of assembly, homotetramer. Interacts with the heterodimeric electron transfer flavoprotein ETF. Requires FAD as cofactor. Post-translationally, acetylated. Could occur at proximity of the cofactor-binding sites and reduce the catalytic activity. Could be deacetylated by SIRT3.

The protein localises to the mitochondrion matrix. The enzyme catalyses a medium-chain 2,3-saturated fatty acyl-CoA + oxidized [electron-transfer flavoprotein] + H(+) = a medium-chain (2E)-enoyl-CoA + reduced [electron-transfer flavoprotein]. It carries out the reaction pentanoyl-CoA + oxidized [electron-transfer flavoprotein] + H(+) = (2E)-pentenoyl-CoA + reduced [electron-transfer flavoprotein]. The catalysed reaction is hexanoyl-CoA + oxidized [electron-transfer flavoprotein] + H(+) = (2E)-hexenoyl-CoA + reduced [electron-transfer flavoprotein]. It catalyses the reaction octanoyl-CoA + oxidized [electron-transfer flavoprotein] + H(+) = (2E)-octenoyl-CoA + reduced [electron-transfer flavoprotein]. The enzyme catalyses decanoyl-CoA + oxidized [electron-transfer flavoprotein] + H(+) = (2E)-decenoyl-CoA + reduced [electron-transfer flavoprotein]. It carries out the reaction dodecanoyl-CoA + oxidized [electron-transfer flavoprotein] + H(+) = (2E)-dodecenoyl-CoA + reduced [electron-transfer flavoprotein]. The catalysed reaction is tetradecanoyl-CoA + oxidized [electron-transfer flavoprotein] + H(+) = (2E)-tetradecenoyl-CoA + reduced [electron-transfer flavoprotein]. It catalyses the reaction oxidized [electron-transfer flavoprotein] + hexadecanoyl-CoA + H(+) = (2E)-hexadecenoyl-CoA + reduced [electron-transfer flavoprotein]. The protein operates within lipid metabolism; mitochondrial fatty acid beta-oxidation. Its function is as follows. Medium-chain specific acyl-CoA dehydrogenase is one of the acyl-CoA dehydrogenases that catalyze the first step of mitochondrial fatty acid beta-oxidation, an aerobic process breaking down fatty acids into acetyl-CoA and allowing the production of energy from fats. The first step of fatty acid beta-oxidation consists in the removal of one hydrogen from C-2 and C-3 of the straight-chain fatty acyl-CoA thioester, resulting in the formation of trans-2-enoyl-CoA. Electron transfer flavoprotein (ETF) is the electron acceptor that transfers electrons to the main mitochondrial respiratory chain via ETF-ubiquinone oxidoreductase (ETF dehydrogenase). Among the different mitochondrial acyl-CoA dehydrogenases, medium-chain specific acyl-CoA dehydrogenase acts specifically on acyl-CoAs with saturated 6 to 12 carbons long primary chains. The chain is Medium-chain specific acyl-CoA dehydrogenase, mitochondrial from Rattus norvegicus (Rat).